Reading from the N-terminus, the 602-residue chain is Rho family-interacting cell polarization regulator 2 (602 aa).

The disordered stretch occupies residues 46–73 (KKPQAKVKKMHNLGHKNSTTPKEPQPKR). Residues 48–59 (PQAKVKKMHNLG) are compositionally biased toward basic residues. The stretch at 83 to 112 (NGLDEYLEVHQTELDKLTAQLKDMRRNSRL) forms a coiled coil. The necessary for interaction with NCAM and myoblast protrusion formation stretch occupies residues 173-421 (RESLTEINRS…TTAATQHRAL (249 aa)). The disordered stretch occupies residues 384-474 (GDLPYEDRVP…RSEVCQKPSN (91 aa)). Polar residues predominate over residues 403-416 (AHVSSSPDITTAAT). A compositionally biased stretch (low complexity) spans 423–437 (SSESSSPDCSSSDSC).

Belongs to the RIPOR family. Homooligomer; homooligomerization is regulated by RHOC and leads to the formation of concatemers through the association of N- and C-termini. Interacts with NCAM.

Its subcellular location is the cytoplasm. It is found in the cytoskeleton. It localises to the cell projection. The protein resides in the filopodium. The protein localises to the apical cell membrane. Its subcellular location is the stereocilium. It is found in the stereocilium membrane. Functionally, acts as an inhibitor of the small GTPase RHOA and plays several roles in the regulation of myoblast and hair cell differentiation, lymphocyte T proliferation and neutrophil polarization. Plays a role in fetal mononuclear myoblast differentiation by promoting filopodia and myotube formation. Maintains naive T lymphocytes in a quiescent state and prevents chemokine-induced T lymphocyte responses, such as cell adhesion, polarization and migration. Involved also in the regulation of neutrophil polarization, chemotaxis and adhesion. Required for normal development of inner and outer hair cell stereocilia within the cochlea of the inner ear. Plays a role for maintaining the structural organization of the basal domain of stereocilia. Involved in mechanosensory hair cell function. Required for normal hearing. This Gallus gallus (Chicken) protein is Rho family-interacting cell polarization regulator 2.